The sequence spans 469 residues: MPREIITIQVGQCGNQIGMEFWKQLCLEHGIGKDGLLEDFATQGGDRKDVFFYQADDQHFIPRSLLIDLEPRVINGIQNSEYRNLYNHENIFVAEHGGGAGNNWASGYHQGEQVVDDIMDMVDREADGSDSLEGFVLCHSIAGGTGSGMGSYLLETLNDRYSKKLVQTYSVFPNQMETSDVVVQPYNSLLTLKRLTLNADCVVVLDNTALNRIAVERLHLSNPTFAQTNSLVSTVMSASTTTLRYPGYMNNDLVGLLASLIPTPRCHFLMTGYTPLTVERQVNMIRKTTVLDVMRRLLQTKNVMVSSYARTKEASQAKYISILNIIQGEVDPTQVHESLQRIRERKLVNFIDWAPASIQVALSRKSPYVQTTHRVSGLMLANHTSIRHLFGKCLGQYEKLRKKQAFLDNYRKFPMFADNDLSEFDESREIIESLVDEYKACESPDYIKWGMEDPGEANVAADLDSKLVV.

Residue 142-148 coordinates GTP; that stretch reads AGGTGSG.

This sequence belongs to the tubulin family.

It localises to the cytoplasm. The protein resides in the cytoskeleton. Its subcellular location is the microtubule organizing center. Tubulin is the major constituent of microtubules. The gamma chain is found at microtubule organizing centers (MTOC) such as the spindle poles, suggesting that it is involved in the minus-end nucleation of microtubule assembly. In Zea mays (Maize), this protein is Tubulin gamma-2 chain (TUBG2).